We begin with the raw amino-acid sequence, 1081 residues long: Probable cellulose synthase A catalytic subunit 8 [UDP-forming] (1081 aa).

Topologically, residues 1-277 (MDGDADAVKS…PSSRINPYRM (277 aa)) are cytoplasmic. The Zn(2+) site is built by cysteine 19, cysteine 22, cysteine 38, cysteine 41, cysteine 46, cysteine 49, cysteine 61, and cysteine 64. Residues 19–65 (CQICGDGVGTTAEGDVFAACDVCGFPVCRPCYEYERKDGTQACPQCK) form an RING-type; degenerate zinc finger. A disordered region spans residues 72–148 (KGSPAIRGEE…YDSGEIPRGY (77 aa)). Residues 81 to 91 (EGEDTDADDVS) are compositionally biased toward acidic residues. The span at 103 to 112 (QKQKIADRMR) shows a compositional bias: basic and acidic residues. The chain crosses the membrane as a helical span at residues 278–298 (VIVLRLVVLSIFLHYRITNPV). Over 299-300 (RN) the chain is Extracellular. The chain crosses the membrane as a helical span at residues 301 to 321 (AYPLWLLSVICEIWFALSWIL). Residues 322-864 (DQFPKWFPIN…INTTIYPLTS (543 aa)) lie on the Cytoplasmic side of the membrane. Positions 360, 366, 367, and 396 each coordinate UDP-alpha-D-glucose. The active site involves aspartate 396. Positions 450 to 477 (VKDRRAMKREYEEFKVRINGLVAKAQKV) form a coiled coil. Residue lysine 537 coordinates UDP-alpha-D-glucose. Lysine 538 and aspartate 562 together coordinate Mn(2+). Residues 660-684 (SLCGGRKKASKSKKKSSDKKKSNKH) form a disordered region. Residues 664-682 (GRKKASKSKKKSSDKKKSN) are compositionally biased toward basic residues. Residue aspartate 781 is part of the active site. Residues 865–885 (IPLLIYCVLPAICLLTGKFII) form a helical membrane-spanning segment. At 886–890 (PEISN) the chain is on the extracellular side. A helical membrane pass occupies residues 891–911 (FASIWFISLFISIFATGILEM). Residues 912–926 (RWSGVGIDEWWRNEQ) are Cytoplasmic-facing. The chain crosses the membrane as a helical span at residues 927-947 (FWVIGGISAHLFAVFQGLLKV). Topologically, residues 948–977 (LAGIDTNFTVTSKASDEDGDFAELYMFKWT) are extracellular. Asparagine 954 is a glycosylation site (N-linked (GlcNAc...) asparagine). A helical transmembrane segment spans residues 978-998 (TLLIPPTTILIINLVGVVAGI). Topologically, residues 999 to 1009 (SYAINSGYQSW) are cytoplasmic. Residues 1010-1030 (GPLFGKLFFAFWVIVHLYPFL) traverse the membrane as a helical segment. The Extracellular portion of the chain corresponds to 1031–1039 (KGLMGRQNR). A helical membrane pass occupies residues 1040-1060 (TPTIVVVWAILLASIFSLLWV). At 1061-1081 (RIDPFTTRVTGPDTQTCGINC) the chain is on the cytoplasmic side.

Belongs to the glycosyltransferase 2 family. Plant cellulose synthase subfamily. The cofactor is Mn(2+). Requires Zn(2+) as cofactor.

It is found in the cell membrane. The catalysed reaction is [(1-&gt;4)-beta-D-glucosyl](n) + UDP-alpha-D-glucose = [(1-&gt;4)-beta-D-glucosyl](n+1) + UDP + H(+). Its pathway is glycan metabolism; plant cellulose biosynthesis. Functionally, probable catalytic subunit of cellulose synthase terminal complexes ('rosettes'), required for beta-1,4-glucan microfibril crystallization, a major mechanism of the cell wall formation. This is Probable cellulose synthase A catalytic subunit 8 [UDP-forming] (CESA8) from Oryza sativa subsp. japonica (Rice).